Here is a 143-residue protein sequence, read N- to C-terminus: Large ribosomal subunit protein uL16 (143 aa).

It belongs to the universal ribosomal protein uL16 family. In terms of assembly, part of the 50S ribosomal subunit.

Binds 23S rRNA and is also seen to make contacts with the A and possibly P site tRNAs. This is Large ribosomal subunit protein uL16 from Thermosynechococcus vestitus (strain NIES-2133 / IAM M-273 / BP-1).